The following is a 427-amino-acid chain: UDP-N-acetylglucosamine 1-carboxyvinyltransferase (427 aa).

22-23 lines the phosphoenolpyruvate pocket; it reads KN. R92 contacts UDP-N-acetyl-alpha-D-glucosamine. D116 functions as the Proton donor in the catalytic mechanism. Residues D312 and M334 each coordinate UDP-N-acetyl-alpha-D-glucosamine.

This sequence belongs to the EPSP synthase family. MurA subfamily.

Its subcellular location is the cytoplasm. It carries out the reaction phosphoenolpyruvate + UDP-N-acetyl-alpha-D-glucosamine = UDP-N-acetyl-3-O-(1-carboxyvinyl)-alpha-D-glucosamine + phosphate. Its pathway is cell wall biogenesis; peptidoglycan biosynthesis. Functionally, cell wall formation. Adds enolpyruvyl to UDP-N-acetylglucosamine. This chain is UDP-N-acetylglucosamine 1-carboxyvinyltransferase, found in Borrelia garinii subsp. bavariensis (strain ATCC BAA-2496 / DSM 23469 / PBi) (Borreliella bavariensis).